The chain runs to 297 residues: HTH-type transcriptional regulator ArgP (297 aa).

Positions 4–60 (PDYRTLQALDAVIRERGFERAAQKLCITQSAVSQRIKQLENMFGQPLLVRTVPPRPT) constitute an HTH lysR-type domain. A DNA-binding region (H-T-H motif) is located at residues 21–40 (FERAAQKLCITQSAVSQRIK).

Belongs to the LysR transcriptional regulatory family. As to quaternary structure, homodimer.

Controls the transcription of genes involved in arginine and lysine metabolism. The chain is HTH-type transcriptional regulator ArgP from Escherichia coli O7:K1 (strain IAI39 / ExPEC).